The primary structure comprises 251 residues: Probable transcriptional regulatory protein cgR_1708 (251 aa).

A disordered region spans residues 1 to 22 (MAGHSKWATTKHKKAANDAKRG).

This sequence belongs to the TACO1 family.

It is found in the cytoplasm. The protein is Probable transcriptional regulatory protein cgR_1708 of Corynebacterium glutamicum (strain R).